A 136-amino-acid polypeptide reads, in one-letter code: Flagellar assembly factor FliW 2 (136 aa).

The protein belongs to the FliW family. In terms of assembly, interacts with translational regulator CsrA and flagellin(s).

The protein localises to the cytoplasm. Acts as an anti-CsrA protein, binds CsrA and prevents it from repressing translation of its target genes, one of which is flagellin. Binds to flagellin and participates in the assembly of the flagellum. This Wolinella succinogenes (strain ATCC 29543 / DSM 1740 / CCUG 13145 / JCM 31913 / LMG 7466 / NCTC 11488 / FDC 602W) (Vibrio succinogenes) protein is Flagellar assembly factor FliW 2.